A 510-amino-acid polypeptide reads, in one-letter code: ATP synthase subunit alpha (510 aa).

170–177 (GDRQTGKT) is a binding site for ATP.

The protein belongs to the ATPase alpha/beta chains family. F-type ATPases have 2 components, CF(1) - the catalytic core - and CF(0) - the membrane proton channel. CF(1) has five subunits: alpha(3), beta(3), gamma(1), delta(1), epsilon(1). CF(0) has three main subunits: a(1), b(2) and c(9-12). The alpha and beta chains form an alternating ring which encloses part of the gamma chain. CF(1) is attached to CF(0) by a central stalk formed by the gamma and epsilon chains, while a peripheral stalk is formed by the delta and b chains.

It is found in the cell inner membrane. It catalyses the reaction ATP + H2O + 4 H(+)(in) = ADP + phosphate + 5 H(+)(out). Functionally, produces ATP from ADP in the presence of a proton gradient across the membrane. The alpha chain is a regulatory subunit. The polypeptide is ATP synthase subunit alpha (Acidiphilium cryptum (strain JF-5)).